The following is a 276-amino-acid chain: NAD-capped RNA hydrolase NudC (276 aa).

R82 contacts substrate. Zn(2+) is bound by residues C112 and C115. E125 is a binding site for substrate. Residues C130 and C133 each contribute to the Zn(2+) site. Residue Y138 coordinates substrate. The Nudix hydrolase domain maps to 139 to 262 (PRISPSMIVL…SIARYLIDLY (124 aa)). A divalent metal cation-binding residues include A172, E188, and E192. A Nudix box motif is present at residues 173 to 194 (GFAEPGESAEECLVREVREEVA). Substrate is bound at residue 206 to 213 (QCWPFPHS). Residue E233 participates in a divalent metal cation binding. A255 serves as a coordination point for substrate.

Belongs to the Nudix hydrolase family. NudC subfamily. Homodimer. It depends on Mg(2+) as a cofactor. Mn(2+) serves as cofactor. Zn(2+) is required as a cofactor.

The catalysed reaction is a 5'-end NAD(+)-phospho-ribonucleoside in mRNA + H2O = a 5'-end phospho-adenosine-phospho-ribonucleoside in mRNA + beta-nicotinamide D-ribonucleotide + 2 H(+). It carries out the reaction NAD(+) + H2O = beta-nicotinamide D-ribonucleotide + AMP + 2 H(+). The enzyme catalyses NADH + H2O = reduced beta-nicotinamide D-ribonucleotide + AMP + 2 H(+). Its function is as follows. mRNA decapping enzyme that specifically removes the nicotinamide adenine dinucleotide (NAD) cap from a subset of mRNAs by hydrolyzing the diphosphate linkage to produce nicotinamide mononucleotide (NMN) and 5' monophosphate mRNA. The NAD-cap is present at the 5'-end of some mRNAs and stabilizes RNA against 5'-processing. Has preference for mRNAs with a 5'-end purine. Catalyzes the hydrolysis of a broad range of dinucleotide pyrophosphates. This Pseudomonas entomophila (strain L48) protein is NAD-capped RNA hydrolase NudC.